The following is a 517-amino-acid chain: DNA primase DnaG (517 aa).

Residues D171–V257 enclose the Toprim domain. 3 residues coordinate Mg(2+): E177, D219, and D221.

It belongs to the archaeal DnaG primase family. As to quaternary structure, forms a ternary complex with MCM helicase and DNA. Component of the archaeal exosome complex. It depends on Mg(2+) as a cofactor.

The enzyme catalyses ssDNA + n NTP = ssDNA/pppN(pN)n-1 hybrid + (n-1) diphosphate.. Functionally, RNA polymerase that catalyzes the synthesis of short RNA molecules used as primers for DNA polymerase during DNA replication. Also part of the exosome, which is a complex involved in RNA degradation. Acts as a poly(A)-binding protein that enhances the interaction between heteromeric, adenine-rich transcripts and the exosome. This is DNA primase DnaG from Methanosarcina barkeri (strain Fusaro / DSM 804).